Reading from the N-terminus, the 1008-residue chain is MKDSEHHHHGHNGFSKFLHKLGFGKSKGKSHKSNTSSIHERENTAAKGPASNVRPARPNVSTSSTSNEVRKSVPVGNPTVHTKTGSSSSPASKMRNTVNLQHIQAANQKTRNAEGERKVAQRRVQSDKAEANDAAMSSSAPTVDVSEGNSAAEPKITPDDSDTPRLNVDMNDKINVDEAAAKSDSKLNVDQINSTTESEKRVEKVNPNIANNPLKSPDAVAYSSETVSDEKQPTEHPVSANVPAKSEKAVCDENTKISLTNTEHYKFHSLRGDVEVVVGDLERDGRDTSLGDASVNEAAKETDVDSSRFISDEKAVTEDAMKTEHASNAPLTDERHFQFHSSEGDIEGIVGTMQRQRQSVSSYDTIVPSQFYKQKVVQNSPPSLLSTDNKIPESGSDHPSSQDNSSKASLVENSQTQSSTPRKPLPTTTSPKVNPEPHSESISDTRPSTPRKVPPSTVPKMNPKLQGGNSVTAPSTPSKVLPAMSPKVAPKFQGGRSSTAPSTPNKVLPAASAKAAPKLQEKAASFDIPNKSTIISTKSTVASPIKANENSPALKSKASFEFPKELDPDGTWNAPIPYPDANCPMAPTYRNLTSEQEEMYEEVLKYCLELKEIPVASNSSKKTDLIELERLWLTRECILRYLRATKWHVSNAKKRIVDTLVWRRHFGVNNMDPDEIQEENATGKQVLLGYDKDGRPCLYLYPARQNTKTSPLQIRHLVFSLECAIDLMPPGVETLALLINFKSSSNRSNPSVGQGKEVLNILQTHYCERLGRALVINIPWAVWGFFKLISPFIDPITREKLKFNEPLDRYVPKDQLDSNFGGSLHFEYHHEKYWPQLVELCKSRRLGILEKWRKMGSKIGTSEWDLKGGEEYVELMQQYVRPSLTNRSSSPTVTPTVNTDRQPKTLTNSADELSPQKRRVENPKPVVKDEGPVSIVEDEESTPVVTKKEDSIPVAQSTKADAGLDAENDLLPKSGSGVSETPAFSHARDVSTASFSDAVSFITADSIE.

3 disordered regions span residues Met1–Glu247, Asp284–Ser306, and Gln374–Lys514. The segment covering Thr79–Thr110 has biased composition (polar residues). Basic and acidic residues-rich tracts occupy residues Arg111 to Ala131 and Met170 to Leu187. Polar residues-rich tracts occupy residues Gln374 to Asn389, Asp397 to Lys432, Gly467 to Ser478, and Gly495 to Asn505. Ser525 and Ser559 each carry phosphoserine. Residues Glu675–Tyr828 form the CRAL-TRIO domain. Residues Ser883 to Pro982 are disordered. Residues Thr885 to Thr899 show a composition bias toward low complexity. A phosphoserine mark is found at Ser888 and Ser890. The span at Ser914–Gly931 shows a compositional bias: basic and acidic residues.

The protein localises to the cell membrane. This chain is CRAL-TRIO domain-containing protein C23B6.04c, found in Schizosaccharomyces pombe (strain 972 / ATCC 24843) (Fission yeast).